Consider the following 109-residue polypeptide: Nucleoid-associated protein CGSHiEE_00780 (109 aa).

The protein belongs to the YbaB/EbfC family. As to quaternary structure, homodimer.

Its subcellular location is the cytoplasm. It is found in the nucleoid. In terms of biological role, binds to DNA and alters its conformation. May be involved in regulation of gene expression, nucleoid organization and DNA protection. This is Nucleoid-associated protein CGSHiEE_00780 from Haemophilus influenzae (strain PittEE).